A 267-amino-acid polypeptide reads, in one-letter code: uncharacterized protein (267 aa).

The tract at residues 72-267 (LTENNNNNNT…EEKKKKKKKK (196 aa)) is disordered. The segment covering 122–145 (DSVSSSTTTTIITNNKKINNNNNN) has biased composition (low complexity). Basic and acidic residues predominate over residues 159–175 (ENEKSVQKSKKEKESPK). Residues 194–218 (SESSSSSSSSSSSESSSSESESSSS) show a composition bias toward low complexity.

This is an uncharacterized protein from Dictyostelium discoideum (Social amoeba).